We begin with the raw amino-acid sequence, 166 residues long: Phosphopantetheine adenylyltransferase (166 aa).

S11 lines the substrate pocket. Residues 11 to 12 (SF) and H19 each bind ATP. 3 residues coordinate substrate: K43, A76, and R90. ATP contacts are provided by residues 91-93 (GLR), E101, and 126-132 (LQPVSSS).

This sequence belongs to the bacterial CoaD family. In terms of assembly, homohexamer. The cofactor is Mg(2+).

It is found in the cytoplasm. It catalyses the reaction (R)-4'-phosphopantetheine + ATP + H(+) = 3'-dephospho-CoA + diphosphate. It functions in the pathway cofactor biosynthesis; coenzyme A biosynthesis; CoA from (R)-pantothenate: step 4/5. Reversibly transfers an adenylyl group from ATP to 4'-phosphopantetheine, yielding dephospho-CoA (dPCoA) and pyrophosphate. This Streptococcus equi subsp. equi (strain 4047) protein is Phosphopantetheine adenylyltransferase.